Consider the following 236-residue polypeptide: Probable transcriptional regulatory protein UUR10_0292 (236 aa).

The protein belongs to the TACO1 family.

It localises to the cytoplasm. In Ureaplasma urealyticum serovar 10 (strain ATCC 33699 / Western), this protein is Probable transcriptional regulatory protein UUR10_0292.